A 360-amino-acid chain; its full sequence is Photosystem II protein D1 (360 aa).

The next 3 membrane-spanning stretches (helical) occupy residues 29-46 (YIGWFGVVMIPTLLTATS), 118-133 (HFLLGVCCYIGREWEL), and 142-156 (WISVAFTAPVAAAAA). His118 serves as a coordination point for chlorophyll a. A pheophytin a-binding site is contributed by Tyr126. Asp170 and Glu189 together coordinate [CaMn4O5] cluster. The chain crosses the membrane as a helical span at residues 197–218 (FHQLGVAGVFGGSLFSAMHGSL). Position 198 (His198) interacts with chlorophyll a. Residues His215 and 264-265 (SF) contribute to the a quinone site. Residue His215 participates in Fe cation binding. His272 contacts Fe cation. A helical membrane pass occupies residues 274–288 (FLGAWPVVGIWLTSM). Residues His332, Glu333, Asp342, and Ala344 each coordinate [CaMn4O5] cluster. Residues 345–360 (SGDSCPVALVAPSING) constitute a propeptide that is removed on maturation.

It belongs to the reaction center PufL/M/PsbA/D family. PSII is composed of 1 copy each of membrane proteins PsbA, PsbB, PsbC, PsbD, PsbE, PsbF, PsbH, PsbI, PsbJ, PsbK, PsbL, PsbM, PsbT, PsbX, PsbY, PsbZ, Psb30/Ycf12, at least 3 peripheral proteins of the oxygen-evolving complex and a large number of cofactors. It forms dimeric complexes. It depends on The D1/D2 heterodimer binds P680, chlorophylls that are the primary electron donor of PSII, and subsequent electron acceptors. It shares a non-heme iron and each subunit binds pheophytin, quinone, additional chlorophylls, carotenoids and lipids. D1 provides most of the ligands for the Mn4-Ca-O5 cluster of the oxygen-evolving complex (OEC). There is also a Cl(-1) ion associated with D1 and D2, which is required for oxygen evolution. The PSII complex binds additional chlorophylls, carotenoids and specific lipids. as a cofactor. In terms of processing, tyr-161 forms a radical intermediate that is referred to as redox-active TyrZ, YZ or Y-Z. C-terminally processed by CTPA; processing is essential to allow assembly of the oxygen-evolving complex and thus photosynthetic growth.

It localises to the plastid. The protein localises to the chloroplast thylakoid membrane. The catalysed reaction is 2 a plastoquinone + 4 hnu + 2 H2O = 2 a plastoquinol + O2. Photosystem II (PSII) is a light-driven water:plastoquinone oxidoreductase that uses light energy to abstract electrons from H(2)O, generating O(2) and a proton gradient subsequently used for ATP formation. It consists of a core antenna complex that captures photons, and an electron transfer chain that converts photonic excitation into a charge separation. The D1/D2 (PsbA/PsbD) reaction center heterodimer binds P680, the primary electron donor of PSII as well as several subsequent electron acceptors. The polypeptide is Photosystem II protein D1 (Palmaria palmata (Dulse)).